We begin with the raw amino-acid sequence, 200 residues long: Putative 3-methyladenine DNA glycosylase (200 aa).

It belongs to the DNA glycosylase MPG family.

The sequence is that of Putative 3-methyladenine DNA glycosylase from Rhodopseudomonas palustris (strain BisB18).